We begin with the raw amino-acid sequence, 113 residues long: MASFSLSILVFFISALVLVPQGFAEYYLNPAYRPPQTKPPVNKPSHKEPPVHKPPHKEPPVNKPRHKEPPVHKPPHKDPPVNKPPQKESPVHKPPRKEPPTHKHPPAEDNIHF.

An N-terminal signal peptide occupies residues 1–24 (MASFSLSILVFFISALVLVPQGFA). The tract at residues 29-113 (NPAYRPPQTK…HPPAEDNIHF (85 aa)) is disordered. The segment covering 32-42 (YRPPQTKPPVN) has biased composition (pro residues). 2 tandem repeats follow at residues 34-38 (PPQTK) and 39-43 (PPVNK). A 15 X 5 AA approximate tandem repeats of P-P-[QVHRTA]-[NHKE]-[KEDT] region spans residues 34–109 (PPQTKPPVNK…PTHKHPPAED (76 aa)). Residues 44 to 48 (PSHKE) form a 3; approximate repeat. Composition is skewed to basic and acidic residues over residues 45–60 (SHKE…KEPP) and 67–113 (KEPP…NIHF). Tandem repeats lie at residues 49-53 (PPVHK), 54-58 (PPHKE), and 59-63 (PPVNK). A 7; approximate repeat occupies 64–68 (PRHKE). 4 repeat units span residues 69–73 (PPVHK), 74–78 (PPHKD), 79–83 (PPVNK), and 84–88 (PPQKE). A 12; approximate repeat occupies 89–93 (SPVHK). 3 consecutive repeat copies span residues 94 to 98 (PPRKE), 99 to 103 (PPTHK), and 105 to 109 (PPAED).

Belongs to the plant proline-rich protein superfamily. ENOD12 family. As to expression, expressed only in young nodules.

Its subcellular location is the secreted. The protein localises to the cell wall. In terms of biological role, involved in the infection process during the plant-rhizobium interaction. The protein is Early nodulin-12B (ENOD12B) of Medicago sativa (Alfalfa).